The primary structure comprises 1274 residues: Virulence protein SSD1 (1274 aa).

Residues 1–13 (MSSSQDYNNNSNN) show a composition bias toward low complexity. 4 disordered regions span residues 1–38 (MSSS…SELT), 61–124 (LEEK…GHSR), 138–337 (ANQK…TLFA), and 413–488 (KEKE…DDVE). Over residues 19–32 (SSRKGKNLHVAHRR) the composition is skewed to basic residues. The span at 72–81 (FTYPSAQGSS) shows a compositional bias: polar residues. Residues 95–106 (NRSSHSRSSSIN) are compositionally biased toward low complexity. A compositionally biased stretch (polar residues) spans 139-152 (NQKQSNRNSLSPTI). The span at 177 to 187 (GDTSGQSSSSH) shows a compositional bias: low complexity. Polar residues predominate over residues 248-263 (SGSNTNTDGINSNWRA). The segment covering 264 to 282 (QQQSPQQQQRQGGLLEPPQ) has biased composition (low complexity). Over residues 320-330 (QQGGHQGGGNN) the composition is skewed to gly residues. The segment covering 413–437 (KEKEEKKRRKDNTLHSRPLTDDIHN) has biased composition (basic and acidic residues). Residues 438 to 453 (DATSAPNTAEGSVTGT) show a composition bias toward polar residues. One can recognise a CSD2 domain in the interval 562–637 (VWFKPTDKKV…EIDSILRDNN (76 aa)). An RNB domain is found at 688 to 1001 (FVDHALHVKR…VHRQLKAVLN (314 aa)). The DIS3L2 C-terminal domain occupies 1050–1136 (GQLLCMGTVV…KNKYRTSALQ (87 aa)). The tract at residues 1174–1217 (SLKSNELHEVEKDETKSMPSSPTQSEIPKNVRTNSSSRISSSGN) is disordered. Positions 1178–1189 (NELHEVEKDETK) are enriched in basic and acidic residues. The segment covering 1190–1207 (SMPSSPTQSEIPKNVRTN) has biased composition (polar residues).

This sequence belongs to the RNR ribonuclease family.

Its function is as follows. Plays a role in resistance to host antimicrobial peptides such as protamine, RP-1, or human beta-defensin-2; allowing colonization of human tissues. Required for resistance to membrane permeabilization and maintenance of mitochondrial membrane potential upon exposure to RP-1. In Candida albicans (strain SC5314 / ATCC MYA-2876) (Yeast), this protein is Virulence protein SSD1 (SSD1).